Reading from the N-terminus, the 189-residue chain is Putative ankyrin repeat protein L38 (189 aa).

The stretch at 108–137 (YGKTPLITAIKSGNCIMVKKLIDYGADFNK) is one ANK repeat.

This Acanthamoeba polyphaga mimivirus (APMV) protein is Putative ankyrin repeat protein L38.